Reading from the N-terminus, the 327-residue chain is Olfactory receptor 226 (327 aa).

At 1–26 the chain is on the extracellular side; the sequence is MERRNHSGRVSEFVLLGFPAPAPLRV. An N-linked (GlcNAc...) asparagine glycan is attached at Asn-5. Residues 27–50 form a helical membrane-spanning segment; the sequence is LLFFLSLLAYVLVLTENMLIIIAI. Residues 51–58 lie on the Cytoplasmic side of the membrane; that stretch reads RNHPTLHK. The helical transmembrane segment at 59–80 threads the bilayer; it reads PMYFFLANMSFLEIWYVTVTIP. Over 81 to 104 the chain is Extracellular; the sequence is KMLAGFIGSKENHGQLISFEACMT. A disulfide bridge connects residues Cys-102 and Cys-194. Residues 105–125 form a helical membrane-spanning segment; it reads QLYFFLGLGCTECVLLAVMAY. The Cytoplasmic portion of the chain corresponds to 126–144; that stretch reads DRYVAICHPLHYPVIVSSR. Residues 145–163 traverse the membrane as a helical segment; sequence LCVQMAAGSWAGGFGISMV. At 164 to 201 the chain is on the extracellular side; sequence KVFLISRLSYCGPNTINHFFCDVSPLLNLSCTDMSTAE. The helical transmembrane segment at 202–224 threads the bilayer; that stretch reads LTDFVLAIFILLGPLSVTGASYM. Residues 225-241 are Cytoplasmic-facing; that stretch reads AITGAVMRIPSAAGRHK. The chain crosses the membrane as a helical span at residues 242–265; it reads AFSTCASHLTVVIIFYAASIFIYA. The Extracellular portion of the chain corresponds to 266-277; the sequence is RPKALSAFDTNK. Residues 278-297 form a helical membrane-spanning segment; the sequence is LVSVLYAVIVPLFNPIIYCL. Residues 298–327 lie on the Cytoplasmic side of the membrane; sequence RNQDVKRALRRTLHLAQDQEANTNKGSKNG.

It belongs to the G-protein coupled receptor 1 family. In terms of tissue distribution, olfactory epithelium.

The protein localises to the cell membrane. Functionally, odorant receptor. This chain is Olfactory receptor 226 (Olr226), found in Rattus norvegicus (Rat).